Here is a 608-residue protein sequence, read N- to C-terminus: UvrABC system protein C (608 aa).

One can recognise a GIY-YIG domain in the interval 15–93 (HQPGVYRMYN…IKQYLPKYNV (79 aa)). The region spanning 203–238 (RQVIQSLVEQMEGASQALNFEKAATIRDQIQSMRRV) is the UVR domain.

The protein belongs to the UvrC family. As to quaternary structure, interacts with UvrB in an incision complex.

It is found in the cytoplasm. In terms of biological role, the UvrABC repair system catalyzes the recognition and processing of DNA lesions. UvrC both incises the 5' and 3' sides of the lesion. The N-terminal half is responsible for the 3' incision and the C-terminal half is responsible for the 5' incision. In Aliivibrio salmonicida (strain LFI1238) (Vibrio salmonicida (strain LFI1238)), this protein is UvrABC system protein C.